Here is a 326-residue protein sequence, read N- to C-terminus: UDP-N-acetylglucosamine transporter (326 aa).

The next 8 membrane-spanning stretches (helical) occupy residues 4–24 (NLKY…VLTM), 38–58 (LSST…IFLV), 136–156 (LGVY…FVQW), 174–194 (FVGL…GVYF), 212–232 (LGFF…GELV), 243–263 (QLTW…AAVI), 269–289 (ILKG…SYFW), and 293–313 (FVPT…TFLY).

It belongs to the nucleotide-sugar transporter family. SLC35A subfamily. Interacts with SLC35A2; the interaction is reduced in the presence of SLC35A4. Found in a complex with SLC35A2 and SLC35A4. Interacts with MGAT4B. In terms of processing, O-Glcnacylation regulates the stability of SLC35A3 and the specific complex formation with MGAT4B.

It is found in the golgi apparatus membrane. It carries out the reaction UMP(out) + UDP-N-acetyl-alpha-D-glucosamine(in) = UMP(in) + UDP-N-acetyl-alpha-D-glucosamine(out). Functionally, transports diphosphate-N-acetylglucosamine (UDP-GlcNAc) from the cytosol into the lumen of the Golgi apparatus, functioning as an antiporter that exchanges UDP-N-acetyl-alpha-D-glucosamine for UMP. May supply UDP-GlcNAc as substrate for Golgi-resident glycosyltransferases that generate highly branched, multiantennary complex N-glycans and keratan sulfate. However, the exact role of SLC35A3 still needs to be elucidated, it could be a member of a catalytically more efficient multiprotein complex rather than function independently as a single transporter. This Mus musculus (Mouse) protein is UDP-N-acetylglucosamine transporter (Slc35a3).